Consider the following 113-residue polypeptide: Nucleoid-associated protein PMT_0025 (113 aa).

The protein belongs to the YbaB/EbfC family. Homodimer.

It localises to the cytoplasm. Its subcellular location is the nucleoid. In terms of biological role, binds to DNA and alters its conformation. May be involved in regulation of gene expression, nucleoid organization and DNA protection. The polypeptide is Nucleoid-associated protein PMT_0025 (Prochlorococcus marinus (strain MIT 9313)).